Here is a 124-residue protein sequence, read N- to C-terminus: CPLHWSSYNGYCYRVFSELKTWEDAESFCYAQHKGSRLASIHSREEEAFVGKLASQTLKYTSMWLGLNNPWKECKWEWSDDAKLDYKVWLRRPYCAVMVVKTDRIFWFNRGCEKTVSFVCKFYS.

3 disulfides stabilise this stretch: Cys1/Cys12, Cys29/Cys120, and Cys95/Cys112. One can recognise a C-type lectin domain in the interval 8–121; sequence YNGYCYRVFS…CEKTVSFVCK (114 aa).

It belongs to the snaclec family. In terms of assembly, heterotetramer of subunit alpha, beta, gamma and delta; only the gamma and the delta subunits are disulfide-linked. Alpha-beta heterodimer and gamma-delta heterodimer associate orthogonally, giving a cruciform conformation. This heterotetramer may covalently dimerizes thanks to the gamma subunit. Expressed by the venom gland.

The protein resides in the secreted. Functionally, potent inhibitor of collagen-induced platelet aggregation. It acts by binding to the integrin alpha2A domain and blocks collagen binding to integrin alpha-2/beta-1 (ITGA2/ITGB1). The gamma/delta subunits mainly contribute to this activity. The protein is Snaclec rhodocetin subunit delta of Calloselasma rhodostoma (Malayan pit viper).